Consider the following 728-residue polypeptide: Phosphoribosylformylglycinamidine synthase subunit PurL (728 aa).

His-54 is a catalytic residue. Residues Tyr-57 and Lys-96 each coordinate ATP. Glu-98 provides a ligand contact to Mg(2+). Substrate-binding positions include 99–102 and Arg-121; that span reads SHNH. Residue His-100 is the Proton acceptor of the active site. Residue Asp-122 coordinates Mg(2+). Residue Gln-245 participates in substrate binding. Asp-273 lines the Mg(2+) pocket. 317–319 contributes to the substrate binding site; that stretch reads ETQ. 2 residues coordinate ATP: Asp-495 and Gly-532. Mg(2+) is bound at residue Asn-533. Position 535 (Ser-535) interacts with substrate.

Belongs to the FGAMS family. In terms of assembly, monomer. Part of the FGAM synthase complex composed of 1 PurL, 1 PurQ and 2 PurS subunits.

The protein resides in the cytoplasm. The catalysed reaction is N(2)-formyl-N(1)-(5-phospho-beta-D-ribosyl)glycinamide + L-glutamine + ATP + H2O = 2-formamido-N(1)-(5-O-phospho-beta-D-ribosyl)acetamidine + L-glutamate + ADP + phosphate + H(+). It functions in the pathway purine metabolism; IMP biosynthesis via de novo pathway; 5-amino-1-(5-phospho-D-ribosyl)imidazole from N(2)-formyl-N(1)-(5-phospho-D-ribosyl)glycinamide: step 1/2. Part of the phosphoribosylformylglycinamidine synthase complex involved in the purines biosynthetic pathway. Catalyzes the ATP-dependent conversion of formylglycinamide ribonucleotide (FGAR) and glutamine to yield formylglycinamidine ribonucleotide (FGAM) and glutamate. The FGAM synthase complex is composed of three subunits. PurQ produces an ammonia molecule by converting glutamine to glutamate. PurL transfers the ammonia molecule to FGAR to form FGAM in an ATP-dependent manner. PurS interacts with PurQ and PurL and is thought to assist in the transfer of the ammonia molecule from PurQ to PurL. In Macrococcus caseolyticus (strain JCSC5402) (Macrococcoides caseolyticum), this protein is Phosphoribosylformylglycinamidine synthase subunit PurL.